The sequence spans 537 residues: Probable alpha-galactosidase A (537 aa).

Residues 1-23 (MNQGTKSILLAATLAAIPWQVYG) form the signal peptide. Cys-46 and Cys-78 are disulfide-bonded. Asn-49, Asn-87, Asn-93, and Asn-123 each carry an N-linked (GlcNAc...) asparagine glycan. A disulfide bridge connects residues Cys-126 and Cys-156. Catalysis depends on Asp-154, which acts as the Nucleophile. An N-linked (GlcNAc...) asparagine glycan is attached at Asn-203. The active-site Proton donor is the Asp-212. Asn-355 and Asn-436 each carry an N-linked (GlcNAc...) asparagine glycan. The Ricin B-type lectin domain maps to 413-537 (CSSVVPTGLV…FGLPSGVQLS (125 aa)). Intrachain disulfides connect Cys-430-Cys-444 and Cys-469-Cys-482. A glycan (N-linked (GlcNAc...) asparagine) is linked at Asn-491.

The protein belongs to the glycosyl hydrolase 27 family.

The protein localises to the secreted. The enzyme catalyses Hydrolysis of terminal, non-reducing alpha-D-galactose residues in alpha-D-galactosides, including galactose oligosaccharides, galactomannans and galactolipids.. In terms of biological role, hydrolyzes a variety of simple alpha-D-galactoside as well as more complex molecules such as oligosaccharides and polysaccharides. The protein is Probable alpha-galactosidase A (aglA) of Aspergillus niger (strain ATCC MYA-4892 / CBS 513.88 / FGSC A1513).